The primary structure comprises 317 residues: Fe-S cluster assembly protein dre2 (317 aa).

Residues 22 to 152 form an N-terminal SAM-like domain region; it reads PVQAKRTLLL…KPNFEPSAAV (131 aa). The tract at residues 153–209 is linker; it reads PLKFGLKKKNKPTPTAVPSIPTGFAAPMGIDSPVTNHDRDEDDELINEDTLLSEEDL. Residues C219, C230, C233, and C235 each contribute to the [2Fe-2S] cluster site. A fe-S binding site A region spans residues 219–235; sequence CQPKTGRRRRACKDCTC. 4 residues coordinate [4Fe-4S] cluster: C280, C283, C291, and C294. 2 short sequence motifs (cx2C motif) span residues 280–283 and 291–294; these read CGSC and CDGC. The interval 280 to 294 is fe-S binding site B; the sequence is CGSCALGDAFRCDGC.

The protein belongs to the anamorsin family. As to quaternary structure, monomer. Interacts with tah18. Interacts with mia40. Requires [2Fe-2S] cluster as cofactor. [4Fe-4S] cluster is required as a cofactor.

It is found in the cytoplasm. It localises to the mitochondrion intermembrane space. Component of the cytosolic iron-sulfur (Fe-S) protein assembly (CIA) machinery required for the maturation of extramitochondrial Fe-S proteins. Part of an electron transfer chain functioning in an early step of cytosolic Fe-S biogenesis, facilitating the de novo assembly of a [4Fe-4S] cluster on the scaffold complex cfd1-nbp35. Electrons are transferred to dre2 from NADPH via the FAD- and FMN-containing protein tah18. Tah18-dre2 are also required for the assembly of the diferric tyrosyl radical cofactor of ribonucleotide reductase (RNR), probably by providing electrons for reduction during radical cofactor maturation in the catalytic small subunit rnr2. The protein is Fe-S cluster assembly protein dre2 of Penicillium rubens (strain ATCC 28089 / DSM 1075 / NRRL 1951 / Wisconsin 54-1255) (Penicillium chrysogenum).